A 469-amino-acid polypeptide reads, in one-letter code: Phosphatidylinositol 4-kinase type 2-beta (469 aa).

Residues 1 to 84 are disordered; sequence MAEACEPTRP…LDRTRTTSSE (84 aa). Ser-37 is subject to Phosphoserine. The region spanning 108 to 439 is the PI3K/PI4K catalytic domain; the sequence is GVFPERISQG…AQMPCVIVEC (332 aa). The tract at residues 114 to 120 is G-loop; sequence ISQGSSG. Positions 121 and 136 each coordinate ATP. The interval 141–143 is important for substrate binding; that stretch reads EPY. An important for interaction with membranes region spans residues 149–162; the sequence is KWTKYVHKVCCPCC. Residues 245–248 and 259–260 each bind ATP; these read QLFV and RR. The segment at 252-260 is important for interaction with membranes; the sequence is KEAEYWLRR. A catalytic loop region spans residues 289–297; sequence RNTDRGNDN. The interval 330–350 is activation loop; the sequence is AIDNGLAFPFKHPDEWRAYPF. Residue Asp-332 coordinates ATP. The tract at residues 345-354 is important for interaction with membranes; sequence WRAYPFHWAW.

It belongs to the PI3/PI4-kinase family. Type II PI4K subfamily.

Its subcellular location is the cytoplasm. The protein localises to the cytosol. It is found in the golgi apparatus membrane. It localises to the endoplasmic reticulum membrane. The protein resides in the cell membrane. Its subcellular location is the early endosome membrane. It catalyses the reaction a 1,2-diacyl-sn-glycero-3-phospho-(1D-myo-inositol) + ATP = a 1,2-diacyl-sn-glycero-3-phospho-(1D-myo-inositol 4-phosphate) + ADP + H(+). Together with PI4K2A and the type III PI4Ks (PIK4CA and PIK4CB) it contributes to the overall PI4-kinase activity of the cell. This contribution may be especially significant in plasma membrane, endosomal and Golgi compartments. The phosphorylation of phosphatidylinositol (PI) to PI4P is the first committed step in the generation of phosphatidylinositol 4,5-bisphosphate (PIP2), a precursor of the second messenger inositol 1,4,5-trisphosphate (InsP3). Contributes to the production of InsP3 in stimulated cells and is likely to be involved in the regulation of vesicular trafficking. This is Phosphatidylinositol 4-kinase type 2-beta (Pi4k2b) from Mus musculus (Mouse).